Consider the following 412-residue polypeptide: Yellow-related salivary protein LJM17 (412 aa).

A signal peptide spans 1–18 (MRFFFVFLAIVLFQGIHG). The N-linked (GlcNAc...) asparagine glycan is linked to Asn-29.

It belongs to the major royal jelly protein family. As to expression, salivary gland.

The protein localises to the secreted. In terms of biological role, probably modulates blood feeding of sand flies on vertebrate species by binding and sequestering different mediators involved in the host response. Binds biogenic amines. Binds serotonin with high affinity. Binds noradrenaline but not adrenaline. Binds dopamine and octopamine. Binds histamine. Inhibits host smooth muscle contraction induced by histamine in bioassay with guinea pig ileum. Immunogenic; elicits antibody production in the host. Functions as a chemoattractant for host neutrophils; likely acts through a G-protein-coupled receptor and effect is dependent on calcium influx. This is Yellow-related salivary protein LJM17 from Lutzomyia longipalpis (Sand fly).